The primary structure comprises 198 residues: FMN-dependent NADH:quinone oxidoreductase (198 aa).

Residues S10, 16 to 18 (SQS), 94 to 97 (MYNF), and 138 to 141 (TRGG) each bind FMN.

The protein belongs to the azoreductase type 1 family. As to quaternary structure, homodimer. The cofactor is FMN.

It catalyses the reaction 2 a quinone + NADH + H(+) = 2 a 1,4-benzosemiquinone + NAD(+). The catalysed reaction is N,N-dimethyl-1,4-phenylenediamine + anthranilate + 2 NAD(+) = 2-(4-dimethylaminophenyl)diazenylbenzoate + 2 NADH + 2 H(+). In terms of biological role, quinone reductase that provides resistance to thiol-specific stress caused by electrophilic quinones. Its function is as follows. Also exhibits azoreductase activity. Catalyzes the reductive cleavage of the azo bond in aromatic azo compounds to the corresponding amines. This chain is FMN-dependent NADH:quinone oxidoreductase, found in Shewanella baltica (strain OS195).